The chain runs to 625 residues: tRNA uridine 5-carboxymethylaminomethyl modification enzyme MnmG (625 aa).

14 to 19 (GAGHAG) is a binding site for FAD. Position 273–287 (273–287 (GPRYCPSIEDKIVRF)) interacts with NAD(+).

Belongs to the MnmG family. In terms of assembly, homodimer. Heterotetramer of two MnmE and two MnmG subunits. The cofactor is FAD.

The protein localises to the cytoplasm. In terms of biological role, NAD-binding protein involved in the addition of a carboxymethylaminomethyl (cmnm) group at the wobble position (U34) of certain tRNAs, forming tRNA-cmnm(5)s(2)U34. This is tRNA uridine 5-carboxymethylaminomethyl modification enzyme MnmG from Clostridium botulinum (strain Okra / Type B1).